A 243-amino-acid polypeptide reads, in one-letter code: MPEDAAVAGGETGALVLFSGGQDSATCLAWALDRFPHVETLGFDYGQRHRVELDRRAALRQGLTALDPAWGRRLGPDHTLALAALGEISDTALTRDSAIAFARDGLPNTFVPGRNLAFLTFAAALAYRRGLRHIVGGMCETDYSGYPDCRDDTIKALQVALNLGMERRFVLHTPLMWIDKAQTWALAETLGGRALVDLVVEESHTCYLGERGARHEWGYGCGTCPACDLRAKGFSRYLAARAE.

18–28 lines the ATP pocket; it reads FSGGQDSATCL. 4 residues coordinate Zn(2+): Cys206, Cys221, Cys224, and Cys227.

It belongs to the QueC family. The cofactor is Zn(2+).

It catalyses the reaction 7-carboxy-7-deazaguanine + NH4(+) + ATP = 7-cyano-7-deazaguanine + ADP + phosphate + H2O + H(+). It participates in purine metabolism; 7-cyano-7-deazaguanine biosynthesis. Functionally, catalyzes the ATP-dependent conversion of 7-carboxy-7-deazaguanine (CDG) to 7-cyano-7-deazaguanine (preQ(0)). In Methylorubrum extorquens (strain PA1) (Methylobacterium extorquens), this protein is 7-cyano-7-deazaguanine synthase.